The chain runs to 76 residues: UPF0154 protein LCA_1273 (76 aa).

A helical transmembrane segment spans residues 3–23; sequence IGIGVLIFVIGALLGAVAGFF. Residues 55-76 are disordered; sequence PSEKKLNQMMSSMKAQQKRSKK.

It belongs to the UPF0154 family.

The protein localises to the cell membrane. The chain is UPF0154 protein LCA_1273 from Latilactobacillus sakei subsp. sakei (strain 23K) (Lactobacillus sakei subsp. sakei).